Here is a 113-residue protein sequence, read N- to C-terminus: Hydrogenase maturation factor HypA (113 aa).

Histidine 2 lines the Ni(2+) pocket. Cysteine 73, cysteine 76, cysteine 89, and cysteine 92 together coordinate Zn(2+).

It belongs to the HypA/HybF family.

Involved in the maturation of [NiFe] hydrogenases. Required for nickel insertion into the metal center of the hydrogenase. The sequence is that of Hydrogenase maturation factor HypA from Azotobacter vinelandii.